Reading from the N-terminus, the 631-residue chain is 1-deoxy-D-xylulose-5-phosphate synthase (631 aa).

Thiamine diphosphate-binding positions include His76 and 117–119; that span reads AHS. Asp148 is a binding site for Mg(2+). Thiamine diphosphate is bound by residues 149-150, Asn177, Tyr284, and Glu365; that span reads GA. Residue Asn177 coordinates Mg(2+).

This sequence belongs to the transketolase family. DXPS subfamily. Homodimer. Mg(2+) is required as a cofactor. It depends on thiamine diphosphate as a cofactor.

It catalyses the reaction D-glyceraldehyde 3-phosphate + pyruvate + H(+) = 1-deoxy-D-xylulose 5-phosphate + CO2. It functions in the pathway metabolic intermediate biosynthesis; 1-deoxy-D-xylulose 5-phosphate biosynthesis; 1-deoxy-D-xylulose 5-phosphate from D-glyceraldehyde 3-phosphate and pyruvate: step 1/1. Functionally, catalyzes the acyloin condensation reaction between C atoms 2 and 3 of pyruvate and glyceraldehyde 3-phosphate to yield 1-deoxy-D-xylulose-5-phosphate (DXP). The sequence is that of 1-deoxy-D-xylulose-5-phosphate synthase from Methylibium petroleiphilum (strain ATCC BAA-1232 / LMG 22953 / PM1).